Here is a 231-residue protein sequence, read N- to C-terminus: NKG2-C type II integral membrane protein (231 aa).

Polar residues predominate over residues methionine 1 to serine 12. Residues methionine 1 to serine 32 form a disordered region. Over methionine 1–lysine 70 the chain is Cytoplasmic. The helical; Signal-anchor for type II membrane protein transmembrane segment at leucine 71–leucine 93 threads the bilayer. The Extracellular segment spans residues isoleucine 94–leucine 231. Residue asparagine 100 is glycosylated (N-linked (GlcNAc...) asparagine). The C-type lectin domain maps to histidine 116 to histidine 229. Disulfide bonds link cysteine 117/cysteine 128, cysteine 145/cysteine 227, and cysteine 206/cysteine 219. N-linked (GlcNAc...) asparagine glycosylation is found at asparagine 149 and asparagine 178.

Heterodimer with KLRD1; disulfide-linked. KLRD1-KLRC2 receptor complex interacts with TYROBP homodimer; this interaction is necessary for the expression on the cell surface. KLRD1-KLRC2 receptor complex can bind with low affinity to HLA-E loaded with self-peptides derived from the signal sequence of classical MHC class Ia. As to expression, expressed in NK cell subsets, in particular in adaptive CD57-positive NK cells (at protein level). Expressed in terminally differentiated cytotoxic gamma-delta T cells (at protein level). Expressed in alpha-beta T cells subsets (at protein level). KLRD1-KLRC1 and KLRD1-KLRC2 are differentially expressed within NK and T cell populations, with only minor subsets expressing both receptor complexes (at protein level).

The protein localises to the cell membrane. Functionally, immune activating receptor involved in self-nonself discrimination. In complex with KLRD1 on cytotoxic lymphocyte subsets, recognizes non-classical major histocompatibility (MHC) class Ib HLA-E loaded with signal sequence-derived peptides from non-classical MHC class Ib HLA-G molecules, likely playing a role in the generation and effector functions of adaptive natural killer (NK) cells and in maternal-fetal tolerance during pregnancy. Regulates the effector functions of terminally differentiated cytotoxic lymphocyte subsets, and in particular may play a role in adaptive NK cell response to viral infection. Upon HLA-E-peptide binding, transmits intracellular signals via the adapter protein TYROBP/DAP12, triggering the phosphorylation of proximal signaling molecules and cell activation. In Homo sapiens (Human), this protein is NKG2-C type II integral membrane protein (KLRC2).